Consider the following 406-residue polypeptide: Elongation factor Tu-B (406 aa).

One can recognise a tr-type G domain in the interval 10–215 (KPHVNVGTIG…AIDEYIPTPV (206 aa)). Positions 19 to 26 (GHVDHGKT) are G1. A GTP-binding site is contributed by 19–26 (GHVDHGKT). Thr26 contacts Mg(2+). The tract at residues 61–65 (GITIN) is G2. The G3 stretch occupies residues 82–85 (DCPG). GTP-binding positions include 82–86 (DCPGH) and 137–140 (NKVD). The tract at residues 137–140 (NKVD) is G4. The tract at residues 175 to 177 (SAL) is G5. Thr395 carries the phosphothreonine modification.

It belongs to the TRAFAC class translation factor GTPase superfamily. Classic translation factor GTPase family. EF-Tu/EF-1A subfamily. Monomer. Post-translationally, phosphorylated on a threonine.

The protein localises to the cytoplasm. It catalyses the reaction GTP + H2O = GDP + phosphate + H(+). In terms of biological role, GTP hydrolase that promotes the GTP-dependent binding of aminoacyl-tRNA to the A-site of ribosomes during protein biosynthesis. Its function is as follows. Protects glycyl-tRNA(Gly) from hydrolysis by E.coli D-aminoacyl-tRNA deacylase (dtd). This chain is Elongation factor Tu-B, found in Thermus thermophilus (strain ATCC 27634 / DSM 579 / HB8).